Consider the following 600-residue polypeptide: Dihydroxy-acid dehydratase (600 aa).

Aspartate 82 contributes to the Mg(2+) binding site. Cysteine 123 provides a ligand contact to [2Fe-2S] cluster. Aspartate 124 and lysine 125 together coordinate Mg(2+). Lysine 125 is subject to N6-carboxylysine. Residue cysteine 192 coordinates [2Fe-2S] cluster. Glutamate 489 is a Mg(2+) binding site. Serine 515 (proton acceptor) is an active-site residue.

Belongs to the IlvD/Edd family. As to quaternary structure, homodimer. The cofactor is [2Fe-2S] cluster. Requires Mg(2+) as cofactor.

It carries out the reaction (2R)-2,3-dihydroxy-3-methylbutanoate = 3-methyl-2-oxobutanoate + H2O. The catalysed reaction is (2R,3R)-2,3-dihydroxy-3-methylpentanoate = (S)-3-methyl-2-oxopentanoate + H2O. It participates in amino-acid biosynthesis; L-isoleucine biosynthesis; L-isoleucine from 2-oxobutanoate: step 3/4. Its pathway is amino-acid biosynthesis; L-valine biosynthesis; L-valine from pyruvate: step 3/4. In terms of biological role, functions in the biosynthesis of branched-chain amino acids. Catalyzes the dehydration of (2R,3R)-2,3-dihydroxy-3-methylpentanoate (2,3-dihydroxy-3-methylvalerate) into 2-oxo-3-methylpentanoate (2-oxo-3-methylvalerate) and of (2R)-2,3-dihydroxy-3-methylbutanoate (2,3-dihydroxyisovalerate) into 2-oxo-3-methylbutanoate (2-oxoisovalerate), the penultimate precursor to L-isoleucine and L-valine, respectively. In Bacteroides fragilis (strain YCH46), this protein is Dihydroxy-acid dehydratase.